The chain runs to 236 residues: Adenylate dimethylallyltransferase (236 aa).

It belongs to the isopentenyl transferase family.

It carries out the reaction dimethylallyl diphosphate + AMP = N(6)-(dimethylallyl)adenosine 5'-phosphate + diphosphate. Transfers dimethylallyl groups to AMP as part of the biosynthesis of cytokinin phytohormones. The polypeptide is Adenylate dimethylallyltransferase (ipt) (Pantoea agglomerans pv. gypsophilae (Erwinia herbicola)).